The primary structure comprises 324 residues: MFCGDYVQGTIFPAPNFNPIMDAQMLGGALQGFDCDKDMLINILTQRCNAQRMMIAEAYQSMYGRDLIGDMREQLSDHFKDVMAGLMYPPPLYDAHELWHAMKGVGTDENCLIEILASRTNGEIFQMREAYCLQYSNNLQEDIYSETSGHFRDTLMNLVQGTREEGYTDPAMAAQDAMVLWEACQQKTGEHKTMLQMILCNKSYQQLRLVFQEFQNISGQDMVDAINECYDGYFQELLVAIVLCVRDKPAYFAYRLYSAIHDFGFHNKTVIRILIARSEIDLLTIRKRYKERYGKSLFHDIRNFASGHYKKALLAICAGDAEDY.

Annexin repeat units follow at residues 17–88 (FNPI…GLMY), 89–160 (PPPL…NLVQ), 171–243 (AMAA…AIVL), and 247–318 (DKPA…AICA).

The protein belongs to the annexin family.

This is Annexin A10 (ANXA10) from Homo sapiens (Human).